Reading from the N-terminus, the 100-residue chain is Large ribosomal subunit protein uL23 (100 aa).

The protein belongs to the universal ribosomal protein uL23 family. Part of the 50S ribosomal subunit. Contacts protein L29, and trigger factor when it is bound to the ribosome.

One of the early assembly proteins it binds 23S rRNA. One of the proteins that surrounds the polypeptide exit tunnel on the outside of the ribosome. Forms the main docking site for trigger factor binding to the ribosome. The chain is Large ribosomal subunit protein uL23 from Lactobacillus acidophilus (strain ATCC 700396 / NCK56 / N2 / NCFM).